Here is a 199-residue protein sequence, read N- to C-terminus: NAD(P)H dehydrogenase (quinone) (199 aa).

In terms of domain architecture, Flavodoxin-like spans Ile-4–Val-190. Residues Ser-10–Ile-15 and Thr-79–Phe-81 each bind FMN. Tyr-12 is an NAD(+) binding site. Trp-99 serves as a coordination point for substrate. His-134 lines the FMN pocket.

Belongs to the WrbA family. FMN is required as a cofactor.

The catalysed reaction is a quinone + NADH + H(+) = a quinol + NAD(+). The enzyme catalyses a quinone + NADPH + H(+) = a quinol + NADP(+). This Photorhabdus laumondii subsp. laumondii (strain DSM 15139 / CIP 105565 / TT01) (Photorhabdus luminescens subsp. laumondii) protein is NAD(P)H dehydrogenase (quinone).